We begin with the raw amino-acid sequence, 405 residues long: Tyrosine-protein phosphatase non-receptor type eak-6 (405 aa).

In terms of domain architecture, Tyrosine-protein phosphatase spans 30 to 309; that stretch reads INQRINIIAD…SFIYDIIIKY (280 aa). The Phosphocysteine intermediate role is filled by Cys-248.

This sequence belongs to the protein-tyrosine phosphatase family. Expressed in the 2 embryonic head hypodermal cells XXXL/R.

The protein resides in the cytoplasm. It localises to the cell membrane. It catalyses the reaction O-phospho-L-tyrosyl-[protein] + H2O = L-tyrosyl-[protein] + phosphate. In terms of biological role, putative phosphatase which, together with eak-4 and sdf-9, negatively regulates dauer larva formation downstream of insulin-like receptor daf-2 and in parallel of age-1, pdk-1 and akt-1. The chain is Tyrosine-protein phosphatase non-receptor type eak-6 from Caenorhabditis elegans.